The primary structure comprises 75 residues: Peptide Ctri10033 (75 aa).

Positions 1-22 (MNSKYLFVFLILIVTFTDLCQG) are cleaved as a signal peptide. Arginine amide is present on arginine 43. The propeptide occupies 47 to 75 (ELGSQYDYLQDFRKRELDLDDLLSKFPDY).

The protein belongs to the non-disulfide-bridged peptide (NDBP) superfamily. Short antimicrobial peptide (group 4) family. In terms of tissue distribution, expressed by the venom gland.

It localises to the secreted. This is Peptide Ctri10033 from Chaerilus tricostatus (Scorpion).